Consider the following 134-residue polypeptide: Small ribosomal subunit protein bS6 (134 aa).

This sequence belongs to the bacterial ribosomal protein bS6 family.

Functionally, binds together with bS18 to 16S ribosomal RNA. This is Small ribosomal subunit protein bS6 from Pelodictyon phaeoclathratiforme (strain DSM 5477 / BU-1).